A 1495-amino-acid polypeptide reads, in one-letter code: Nuclear pore complex protein NUP160 (1495 aa).

As to quaternary structure, part of the nuclear pore complex (NPC). The NPC has an eight-fold symmetrical structure comprising a central transport channel and two rings, the cytoplasmic and nuclear rings, to which eight filaments are attached. The cytoplasmic filaments have loose ends, while the nuclear filaments are joined in a distal ring, forming a nuclear basket. NPCs are highly dynamic in configuration and composition, and can be devided in 3 subcomplexes, the NUP62 subcomplex, the NUP107-160 subcomplex and the NUP93 subcomplex, containing approximately 30 different nucleoporin proteins. Expressed in roots, stems, anthers, siliques and vascular tissues of cotyledons, leaves and hypocotyls.

It localises to the nucleus membrane. It is found in the nucleus. Its subcellular location is the nuclear pore complex. Functionally, contributes to the transfer of mature mRNA from the nucleus to the cytosol. Required for both R gene-mediated and basal disease resistance. RNA export seems to play a critical role in stress responses and regulation of plant growth and development. Required for proper expression of factors associated with auxin signaling. The protein is Nuclear pore complex protein NUP160 of Arabidopsis thaliana (Mouse-ear cress).